We begin with the raw amino-acid sequence, 195 residues long: ATP-dependent Clp protease proteolytic subunit 1 (195 aa).

Ser96 (nucleophile) is an active-site residue. The active site involves His121.

The protein belongs to the peptidase S14 family. As to quaternary structure, fourteen ClpP subunits assemble into 2 heptameric rings which stack back to back to give a disk-like structure with a central cavity, resembling the structure of eukaryotic proteasomes.

Its subcellular location is the cytoplasm. The enzyme catalyses Hydrolysis of proteins to small peptides in the presence of ATP and magnesium. alpha-casein is the usual test substrate. In the absence of ATP, only oligopeptides shorter than five residues are hydrolyzed (such as succinyl-Leu-Tyr-|-NHMec, and Leu-Tyr-Leu-|-Tyr-Trp, in which cleavage of the -Tyr-|-Leu- and -Tyr-|-Trp bonds also occurs).. Functionally, cleaves peptides in various proteins in a process that requires ATP hydrolysis. Has a chymotrypsin-like activity. Plays a major role in the degradation of misfolded proteins. The sequence is that of ATP-dependent Clp protease proteolytic subunit 1 from Prochlorococcus marinus (strain MIT 9312).